Here is a 374-residue protein sequence, read N- to C-terminus: tRNA (guanine(26)-N(2))-dimethyltransferase (374 aa).

The Trm1 methyltransferase domain maps to 4–368 (IEATEGTTTF…APLPVLYDAI (365 aa)). S-adenosyl-L-methionine is bound by residues Arg41, Arg66, Asp82, Asp108, and Ala109. Positions 237, 240, 256, and 259 each coordinate Zn(2+).

Belongs to the class I-like SAM-binding methyltransferase superfamily. Trm1 family.

It catalyses the reaction guanosine(26) in tRNA + 2 S-adenosyl-L-methionine = N(2)-dimethylguanosine(26) in tRNA + 2 S-adenosyl-L-homocysteine + 2 H(+). Functionally, dimethylates a single guanine residue at position 26 of a number of tRNAs using S-adenosyl-L-methionine as donor of the methyl groups. This Methanoregula boonei (strain DSM 21154 / JCM 14090 / 6A8) protein is tRNA (guanine(26)-N(2))-dimethyltransferase.